The following is a 285-amino-acid chain: Bifunctional protein FolD (285 aa).

NADP(+)-binding positions include 165–167, T192, and V233; that span reads GRG.

The protein belongs to the tetrahydrofolate dehydrogenase/cyclohydrolase family. In terms of assembly, homodimer.

It catalyses the reaction (6R)-5,10-methylene-5,6,7,8-tetrahydrofolate + NADP(+) = (6R)-5,10-methenyltetrahydrofolate + NADPH. The enzyme catalyses (6R)-5,10-methenyltetrahydrofolate + H2O = (6R)-10-formyltetrahydrofolate + H(+). The protein operates within one-carbon metabolism; tetrahydrofolate interconversion. Functionally, catalyzes the oxidation of 5,10-methylenetetrahydrofolate to 5,10-methenyltetrahydrofolate and then the hydrolysis of 5,10-methenyltetrahydrofolate to 10-formyltetrahydrofolate. In Corynebacterium jeikeium (strain K411), this protein is Bifunctional protein FolD.